Here is a 268-residue protein sequence, read N- to C-terminus: Protein MGF 300-1L (268 aa).

At 1-175 (MVSLTTCCLK…QTFKTFYAKN (175 aa)) the chain is on the cytoplasmic side. A helical transmembrane segment spans residues 176–193 (YSLSTLYCIFLAIYYKLY). Residues 194-268 (TALRKMVKIY…MYAFSQNDYW (75 aa)) lie on the Extracellular side of the membrane.

This sequence belongs to the asfivirus MGF 300 family.

The protein localises to the host membrane. Plays a role in virus cell tropism, and may be required for efficient virus replication in macrophages. The chain is Protein MGF 300-1L from Ornithodoros (relapsing fever ticks).